The sequence spans 253 residues: Ipsdienol dehydrogenase (253 aa).

NAD(+) contacts are provided by residues 12–40 (VTGG…FSRN) and D63. Residue S149 participates in substrate binding. Y162 acts as the Proton acceptor in catalysis. Position 166 (K166) interacts with NAD(+).

It belongs to the short-chain dehydrogenases/reductases (SDR) family. In terms of tissue distribution, specifically expressed in male midguts. Expressed at higher level in the anterior midgut of fed males.

It localises to the cytoplasm. The protein resides in the cytosol. It catalyses the reaction (4R)-ipsdienol + NADP(+) = ipsdienone + NADPH + H(+). The enzyme catalyses (4R)-ipsdienol + NAD(+) = ipsdienone + NADH + H(+). Functionally, catalyzes the oxidation of racemic ipsdienol and (4R)-(-)-ipsdienol to form ipsdienone (2-methyl-6-methylene-2,7-octadien-4-one), an intermediate in the biosynthesis of pheromonal ipsdienol in male pine engraver beetles. In contrast, (4S)-(+)-ipsdienol is not a substrate. The sequence is that of Ipsdienol dehydrogenase from Ips pini (Pine engraver beetle).